The sequence spans 271 residues: Proteasome inhibitor PI31 subunit (271 aa).

Ala-2 carries the N-acetylalanine modification. The important for homodimerization and interaction with FBXO7 stretch occupies residues 2 to 150; it reads AGLEVLFASA…PIHEQWEKAN (149 aa). At Ser-153 the chain carries Phosphoserine. At Arg-205 the chain carries Omega-N-methylarginine. Arg-219 carries the post-translational modification Asymmetric dimethylarginine. Residues 222-271 are disordered; it reads IDPSSGLPNRLPPGAVPPGARFDPFGPIGTSPPGPNPDHLPPPGYDDMYL. Arg-231 carries the omega-N-methylarginine modification. Pro residues predominate over residues 251–265; sequence TSPPGPNPDHLPPPG. Position 252 is a phosphoserine (Ser-252).

It belongs to the proteasome inhibitor PI31 family. In terms of assembly, monomer and homodimer. Interacts with FBXO7.

It is found in the cytoplasm. The protein localises to the endoplasmic reticulum. Plays an important role in control of proteasome function. Inhibits the hydrolysis of protein and peptide substrates by the 20S proteasome. Also inhibits the activation of the proteasome by the proteasome regulatory proteins PA700 and PA28. This is Proteasome inhibitor PI31 subunit (PSMF1) from Pongo abelii (Sumatran orangutan).